The following is a 258-amino-acid chain: Imidazole glycerol phosphate synthase subunit HisF (258 aa).

Residues D12 and D131 contribute to the active site.

This sequence belongs to the HisA/HisF family. Heterodimer of HisH and HisF.

The protein resides in the cytoplasm. The catalysed reaction is 5-[(5-phospho-1-deoxy-D-ribulos-1-ylimino)methylamino]-1-(5-phospho-beta-D-ribosyl)imidazole-4-carboxamide + L-glutamine = D-erythro-1-(imidazol-4-yl)glycerol 3-phosphate + 5-amino-1-(5-phospho-beta-D-ribosyl)imidazole-4-carboxamide + L-glutamate + H(+). Its pathway is amino-acid biosynthesis; L-histidine biosynthesis; L-histidine from 5-phospho-alpha-D-ribose 1-diphosphate: step 5/9. In terms of biological role, IGPS catalyzes the conversion of PRFAR and glutamine to IGP, AICAR and glutamate. The HisF subunit catalyzes the cyclization activity that produces IGP and AICAR from PRFAR using the ammonia provided by the HisH subunit. The chain is Imidazole glycerol phosphate synthase subunit HisF from Corynebacterium glutamicum (strain R).